A 156-amino-acid chain; its full sequence is Small ribosomal subunit protein uS7 (156 aa).

The protein belongs to the universal ribosomal protein uS7 family. Part of the 30S ribosomal subunit. Contacts proteins S9 and S11.

One of the primary rRNA binding proteins, it binds directly to 16S rRNA where it nucleates assembly of the head domain of the 30S subunit. Is located at the subunit interface close to the decoding center, probably blocks exit of the E-site tRNA. The sequence is that of Small ribosomal subunit protein uS7 from Histophilus somni (strain 129Pt) (Haemophilus somnus).